The following is a 700-amino-acid chain: E3 ubiquitin-protein ligase SspH1 (700 aa).

Positions 1–395 are interaction with target proteins; sequence MFNIRNTQPS…HSGIRIHFDM (395 aa). 8 LRR repeats span residues 217–238, 239–257, 258–279, 280–297, 298–319, 320–337, 338–360, and 361–381; these read HITT…PEGL, RELE…SLPQ, GLQK…PPGL, GDLA…EMPP, ALRE…PSGL, QKLW…EMSP, GLQE…TGLS, and SAAR…QALR. The interval 396 to 403 is linker; that stretch reads AGPSVPRE. Residues 404–700 form an E3 ubiquitin-protein ligase catalytic domain region; that stretch reads ARALHLAVAD…SYLTARWRLN (297 aa). Residues 406 to 700 enclose the NEL domain; the sequence is ALHLAVADWL…SYLTARWRLN (295 aa). C492 functions as the Glycyl thioester intermediate in the catalytic mechanism.

Belongs to the LRR-containing bacterial E3 ligase family. Interacts (via leucine-rich repeat region) with host PKN1 (via the second REM repeat). Post-translationally, ubiquitinated in the presence of host E1 ubiquitin-activating enzyme, E2 ubiquitin-conjugating enzyme and ubiquitin.

The protein resides in the secreted. It is found in the host cytoplasm. It localises to the host nucleus. The catalysed reaction is S-ubiquitinyl-[E2 ubiquitin-conjugating enzyme]-L-cysteine + [acceptor protein]-L-lysine = [E2 ubiquitin-conjugating enzyme]-L-cysteine + N(6)-ubiquitinyl-[acceptor protein]-L-lysine.. Its activity is regulated as follows. Exists in an autoinhibited state in the absence of substrate protein, due to interactions of the leucine-rich repeat domain with the catalytic domain. Is activated upon binding to a substrate protein. Functionally, effector proteins function to alter host cell physiology and promote bacterial survival in host tissues. This protein is an E3 ubiquitin-protein ligase that interferes with the host's ubiquitination pathway and targets host proteins for proteasomal degradation. Can ubiquitinate ubiquitin, giving rise to polyubiquitin chains (in vitro). Polyubiquitinates host PKN1, leading to its proteasomal degradation. Down-modulates production of host pro-inflammatory cytokines by inhibiting NF-kappa-B-dependent gene expression; this depends only partially on its E3 ubiquitin-protein ligase activity. This is E3 ubiquitin-protein ligase SspH1 (sspH1) from Salmonella typhimurium (strain 14028s / SGSC 2262).